The following is a 198-amino-acid chain: Recombination protein RecR (198 aa).

Residues 56–71 form a C4-type zinc finger; that stretch reads CKICHSLTENEICDIC. Residues 79-174 form the Toprim domain; it reads HLLCVVESPA…HMTRIAQGVP (96 aa).

Belongs to the RecR family.

Its function is as follows. May play a role in DNA repair. It seems to be involved in an RecBC-independent recombinational process of DNA repair. It may act with RecF and RecO. This chain is Recombination protein RecR, found in Acinetobacter baylyi (strain ATCC 33305 / BD413 / ADP1).